The sequence spans 409 residues: 5-aminolevulinate synthase (409 aa).

Positions 21 and 136 each coordinate substrate. Residues Ser188, His216, and Thr244 each coordinate pyridoxal 5'-phosphate. Lys247 is an active-site residue. Lys247 carries the post-translational modification N6-(pyridoxal phosphate)lysine. Pyridoxal 5'-phosphate contacts are provided by Thr276 and Thr277. Position 362 (Thr362) interacts with substrate.

Belongs to the class-II pyridoxal-phosphate-dependent aminotransferase family. In terms of assembly, homodimer. The cofactor is pyridoxal 5'-phosphate.

The enzyme catalyses succinyl-CoA + glycine + H(+) = 5-aminolevulinate + CO2 + CoA. It participates in porphyrin-containing compound metabolism; protoporphyrin-IX biosynthesis; 5-aminolevulinate from glycine: step 1/1. This Bradyrhizobium diazoefficiens (strain JCM 10833 / BCRC 13528 / IAM 13628 / NBRC 14792 / USDA 110) protein is 5-aminolevulinate synthase (hemA).